A 557-amino-acid chain; its full sequence is MSLSTLKREQIKKDLKDQEFDVVIIGGGITGAGIALDASERGMKVALVEMQDFAQGTSSRSTKLVHGGLRYLKQLQVGVVAETGRERAIVYENGPHVTTPERMLLPMHKGGSMGKFTTSIGLAMYDRLAGVKKAERKTMLNAKETLEKEPLVKKAGLKGGGSYVEYRTDDARLTIEVMKRAEEKGAKVINHTKSVHFTYDSNEKVNGIQVEDQISNETYPIKAKKVINASGPWVDEVRSGDYARNNKQLRLTKGVHIVIDQSKFPLGQAVYFDTEKDGRMIFAIPREGKAYVGTTDTFYDNNKTSPLANQEDRDYLIDAINYMFPDVNVADEDIESSWAGVRPLILEEGKDPSEISRKDEVWEGKSGLLTIAGGKLTGYRHMALEIVDLLSKRLKSEFGLKFDKCATKHLTISGGDVGGSANFDKFIEQKVEEAKSYQIDESTARHFASKYGSNAEELFKIAQTAQYQETGLPLDIYTELVYSIQNEMVYRPTDFFIRRTGKLYFKIDDVLNYKEQVIDVMAGLLGYTNIEKEAYTKELQIAIDEAQTGNHQPAVKE.

An FAD-binding site is contributed by 21 to 49 (DVVIIGGGITGAGIALDASERGMKVALVE).

This sequence belongs to the FAD-dependent glycerol-3-phosphate dehydrogenase family. FAD serves as cofactor.

It is found in the cytoplasm. It catalyses the reaction a quinone + sn-glycerol 3-phosphate = dihydroxyacetone phosphate + a quinol. It functions in the pathway polyol metabolism; glycerol degradation via glycerol kinase pathway; glycerone phosphate from sn-glycerol 3-phosphate (aerobic route): step 1/1. The polypeptide is Aerobic glycerol-3-phosphate dehydrogenase (glpD) (Staphylococcus saprophyticus subsp. saprophyticus (strain ATCC 15305 / DSM 20229 / NCIMB 8711 / NCTC 7292 / S-41)).